We begin with the raw amino-acid sequence, 169 residues long: Peptide deformylase (169 aa).

Residues C91 and H133 each coordinate Fe cation. E134 is a catalytic residue. Fe cation is bound at residue H137.

The protein belongs to the polypeptide deformylase family. Fe(2+) serves as cofactor.

The catalysed reaction is N-terminal N-formyl-L-methionyl-[peptide] + H2O = N-terminal L-methionyl-[peptide] + formate. Its function is as follows. Removes the formyl group from the N-terminal Met of newly synthesized proteins. Requires at least a dipeptide for an efficient rate of reaction. N-terminal L-methionine is a prerequisite for activity but the enzyme has broad specificity at other positions. This chain is Peptide deformylase, found in Escherichia coli (strain K12 / DH10B).